A 174-amino-acid polypeptide reads, in one-letter code: Beta-lactoglobulin (174 aa).

A signal peptide spans 1-18 (MKFLLLTVGLTSICAIQA). 2 disulfide bridges follow: Cys79–Cys172 and Cys122–Cys134.

The protein belongs to the calycin superfamily. Lipocalin family. As to quaternary structure, monomer.

The protein resides in the secreted. Functionally, lactoglobulin is the primary component of whey, it binds retinol and is probably involved in the transport of that molecule. The sequence is that of Beta-lactoglobulin (LGB) from Trichosurus vulpecula (Brush-tailed possum).